Consider the following 504-residue polypeptide: Maturase K (504 aa).

The protein belongs to the intron maturase 2 family. MatK subfamily.

The protein localises to the plastid. It is found in the chloroplast. Its function is as follows. Usually encoded in the trnK tRNA gene intron. Probably assists in splicing its own and other chloroplast group II introns. The protein is Maturase K of Quercus robur (English oak).